Reading from the N-terminus, the 74-residue chain is uncharacterized protein (74 aa).

This is an uncharacterized protein from Archaeoglobus fulgidus (strain ATCC 49558 / DSM 4304 / JCM 9628 / NBRC 100126 / VC-16).